Reading from the N-terminus, the 137-residue chain is Large-conductance mechanosensitive channel (137 aa).

Helical transmembrane passes span 16–36 and 83–103; these read VIDL…VDSI and GNFI…FLMI.

The protein belongs to the MscL family. As to quaternary structure, homopentamer.

The protein localises to the cell inner membrane. In terms of biological role, channel that opens in response to stretch forces in the membrane lipid bilayer. May participate in the regulation of osmotic pressure changes within the cell. The chain is Large-conductance mechanosensitive channel from Methylibium petroleiphilum (strain ATCC BAA-1232 / LMG 22953 / PM1).